The primary structure comprises 481 residues: Trichosetin biosynthesis cluster MFS transporter (481 aa).

The span at 1 to 13 (MSTTPQMSQSGFQ) shows a compositional bias: polar residues. Positions 1-63 (MSTTPQMSQS…DGPDDPQHPL (63 aa)) are disordered. Over residues 20–31 (GAREDVGTEAQE) the composition is skewed to basic and acidic residues. N-linked (GlcNAc...) asparagine glycosylation occurs at Asn64. The helical transmembrane segment at 72–92 (LHVGIVSLSTLAANLAATMFA) threads the bilayer. A glycan (N-linked (GlcNAc...) asparagine) is linked at Asn103. 5 helical membrane-spanning segments follow: residues 111 to 131 (AMTV…LAPL), 147 to 167 (VYMA…FLVF), 169 to 189 (IIAG…VADL), 200 to 220 (ALFA…GGFV), and 228 to 248 (WTFR…FALM). Asn252 carries N-linked (GlcNAc...) asparagine glycosylation. Transmembrane regions (helical) follow at residues 302-322 (PIVL…FLLF), 353-373 (LLLM…YGWT), 380-400 (WIVP…VVIP), 403-423 (IYLV…ANLL), and 446-466 (GWGN…PWIF).

This sequence belongs to the major facilitator superfamily.

The protein resides in the cell membrane. Efflux pump required for efficient secretion of trichosetin or other secondary metabolies produced by the trichosetin gene cluster. Plays a crucial role in detoxification of the toxic trichosetin in Gibberella fujikuroi cells. The chain is Trichosetin biosynthesis cluster MFS transporter from Gibberella fujikuroi (strain CBS 195.34 / IMI 58289 / NRRL A-6831) (Bakanae and foot rot disease fungus).